A 372-amino-acid chain; its full sequence is PqqA peptide cyclase (372 aa).

A Radical SAM core domain is found at 4-220; that stretch reads APPPLSVLLE…ETARRQLGDR (217 aa). Residues Cys18, Cys22, and Cys25 each coordinate [4Fe-4S] cluster.

It belongs to the radical SAM superfamily. PqqE family. In terms of assembly, interacts with PqqD. The interaction is necessary for activity of PqqE. [4Fe-4S] cluster is required as a cofactor.

The catalysed reaction is [PQQ precursor protein] + S-adenosyl-L-methionine = E-Y cross-linked-[PQQ precursor protein] + 5'-deoxyadenosine + L-methionine + H(+). The protein operates within cofactor biosynthesis; pyrroloquinoline quinone biosynthesis. Functionally, catalyzes the cross-linking of a glutamate residue and a tyrosine residue in the PqqA protein as part of the biosynthesis of pyrroloquinoline quinone (PQQ). This is PqqA peptide cyclase from Xanthomonas axonopodis pv. citri (strain 306).